We begin with the raw amino-acid sequence, 180 residues long: ADP-ribosylation factor 4 (180 aa).

Gly-2 carries the N-myristoyl glycine lipid modification. GTP is bound by residues 24–31 (GLDAAGKT), 67–71 (DVGGQ), and 126–129 (NKQD). At Ser-147 the chain carries Phosphoserine.

This sequence belongs to the small GTPase superfamily. Arf family. In terms of assembly, forms a complex containing RAB11A, ASAP1, RAB3IP, RAP11FIP3 and ARF4; the complex promotes preciliary trafficking; the complex binds to RHO in photoreceptor cells and promotes RHO ciliary transport.

The protein localises to the golgi apparatus. It is found in the membrane. Its function is as follows. GTP-binding protein that functions as an allosteric activator of the cholera toxin catalytic subunit, an ADP-ribosyltransferase. Involved in protein trafficking; may modulate vesicle budding and uncoating within the Golgi apparatus. Part of the ciliary targeting complex containing Rab11, ASAP1, Rabin8/RAB3IP, RAB11FIP3 and ARF4, which direct preciliary vesicle trafficking to mother centriole and ciliogenesis initiation. The protein is ADP-ribosylation factor 4 (ARF4) of Homo sapiens (Human).